The sequence spans 2195 residues: Activating signal cointegrator 1 complex subunit 3 (2195 aa).

A coiled-coil region spans residues 31–88 (EQVVARNKEIMKKRNEKKKEKDRIIEKGQLTWSYFSDSKQNKEKEKENRQIFNKFKEI). A compositionally biased stretch (basic and acidic residues) spans 367-378 (QLKKDDKKRYKN). The segment at 367–387 (QLKKDDKKRYKNDQQQQQQQQ) is disordered. In terms of domain architecture, Helicase ATP-binding 1 spans 492 to 675 (ESAYKSNENI…FIRAPASGTH (184 aa)). Residue 505–512 (APTGAGKT) participates in ATP binding. Residues 617 to 620 (DEIH) carry the DEAH box motif. Positions 705–920 (NMNQLCYERL…NVNEAVNWLS (216 aa)) constitute a Helicase C-terminal 1 domain. The region spanning 980–1286 (MTELGRIASH…GSEGIREISF (307 aa)) is the SEC63 1 domain. Residues 1336–1511 (HTLYYTNNNV…WMGIDRVGLF (176 aa)) form the Helicase ATP-binding 2 domain. 1349–1356 (SPTGSGKT) contacts ATP. Residues 1453–1456 (DEIH) carry the DEAH box motif. Residues 1545 to 1750 (SFAAIATYSP…GTIQSKQGAI (206 aa)) enclose the Helicase C-terminal 2 domain. The 160-residue stretch at 1810–1969 (PMSMGKIASF…LPHINKDFAD (160 aa)) folds into the SEC63 2 domain. Residues 2032-2062 (TNNNSNNNDDNNNENNNNNNKKNNNNNNNNN) show a composition bias toward low complexity. Residues 2032-2064 (TNNNSNNNDDNNNENNNNNNKKNNNNNNNNNKS) are disordered.

It belongs to the helicase family.

It localises to the nucleus. The protein resides in the cytoplasm. The protein localises to the cytosol. It catalyses the reaction Couples ATP hydrolysis with the unwinding of duplex DNA by translocating in the 3'-5' direction.. The enzyme catalyses ATP + H2O = ADP + phosphate + H(+). Functionally, ATPase involved both in DNA repair and rescue of stalled ribosomes. This is Activating signal cointegrator 1 complex subunit 3 (ascc3) from Dictyostelium discoideum (Social amoeba).